Consider the following 751-residue polypeptide: Polyadenylate-binding protein, cytoplasmic and nuclear (751 aa).

2 stretches are compositionally biased toward polar residues: residues 1 to 26 (MSAE…NPAA) and 36 to 50 (ESAS…NQPH). Positions 1 to 50 (MSAEVSTTPAADNTVNGTPEATNPAATSAPEVTAVESASPSATPSANQPH) are disordered. RRM domains are found at residues 52-130 (ASLY…WSQR), 140-217 (GNVF…HHIS), 233-310 (TNVY…RAQK), and 336-458 (VNLY…LAQR). Disordered stretches follow at residues 371–413 (TVTA…KKTE) and 601–643 (GQGM…REEV). The span at 379–413 (ESEKEKESNKENEKEGEEKTEEKPKESEEEAKKTE) shows a compositional bias: basic and acidic residues. Residues 603-629 (GMRGPGYGQGRGGAPVQGGPRPQGGRG) are compositionally biased toward gly residues. The PABC domain occupies 646–723 (TGGLTAQTLN…ALSVYDEYMK (78 aa)). Positions 725 to 751 (KGEGEAPAEPAKPKEDAAETATEENKS) are disordered. Residues 735–751 (AKPKEDAAETATEENKS) show a composition bias toward basic and acidic residues.

Belongs to the polyadenylate-binding protein type-1 family.

The protein localises to the cytoplasm. Its subcellular location is the nucleus. Functionally, binds the poly(A) tail of mRNA. Appears to be an important mediator of the multiple roles of the poly(A) tail in mRNA biogenesis, stability and translation. In the nucleus, involved in both mRNA cleavage and polyadenylation. Is also required for efficient mRNA export to the cytoplasm. Acts in concert with a poly(A)-specific nuclease (PAN) to affect poly(A) tail shortening, which may occur concomitantly with either nucleocytoplasmic mRNA transport or translational initiation. In the cytoplasm, stimulates translation initiation and regulates mRNA decay through translation termination-coupled poly(A) shortening, probably mediated by PAN. This Neosartorya fischeri (strain ATCC 1020 / DSM 3700 / CBS 544.65 / FGSC A1164 / JCM 1740 / NRRL 181 / WB 181) (Aspergillus fischerianus) protein is Polyadenylate-binding protein, cytoplasmic and nuclear (pab1).